The primary structure comprises 490 residues: GTPase Der (490 aa).

2 consecutive EngA-type G domains span residues 3-166 (PVVA…MEDL) and 203-376 (IKLA…DSST). Residues 9–16 (GRPNVGKS), 56–60 (DTGGI), 118–121 (NKID), 209–216 (GRPNVGKS), 256–260 (DTAGV), and 321–324 (NKWD) contribute to the GTP site. Residues 377 to 461 (RRVGTSMLTR…PIRIQFKEGE (85 aa)) form the KH-like domain.

It belongs to the TRAFAC class TrmE-Era-EngA-EngB-Septin-like GTPase superfamily. EngA (Der) GTPase family. As to quaternary structure, associates with the 50S ribosomal subunit.

In terms of biological role, GTPase that plays an essential role in the late steps of ribosome biogenesis. The chain is GTPase Der from Shigella boydii serotype 18 (strain CDC 3083-94 / BS512).